A 75-amino-acid chain; its full sequence is Small ribosomal subunit protein bS18 (75 aa).

The protein belongs to the bacterial ribosomal protein bS18 family. In terms of assembly, part of the 30S ribosomal subunit. Forms a tight heterodimer with protein bS6.

In terms of biological role, binds as a heterodimer with protein bS6 to the central domain of the 16S rRNA, where it helps stabilize the platform of the 30S subunit. The polypeptide is Small ribosomal subunit protein bS18 (Buchnera aphidicola subsp. Acyrthosiphon pisum (strain 5A)).